The primary structure comprises 368 residues: Histidinol-phosphate aminotransferase (368 aa).

K226 is modified (N6-(pyridoxal phosphate)lysine).

Belongs to the class-II pyridoxal-phosphate-dependent aminotransferase family. Histidinol-phosphate aminotransferase subfamily. In terms of assembly, homodimer. Pyridoxal 5'-phosphate serves as cofactor.

The enzyme catalyses L-histidinol phosphate + 2-oxoglutarate = 3-(imidazol-4-yl)-2-oxopropyl phosphate + L-glutamate. It functions in the pathway amino-acid biosynthesis; L-histidine biosynthesis; L-histidine from 5-phospho-alpha-D-ribose 1-diphosphate: step 7/9. The sequence is that of Histidinol-phosphate aminotransferase from Colwellia psychrerythraea (strain 34H / ATCC BAA-681) (Vibrio psychroerythus).